Reading from the N-terminus, the 565-residue chain is Sulfite reductase [NADPH] hemoprotein beta-component (565 aa).

4 residues coordinate [4Fe-4S] cluster: Cys429, Cys435, Cys474, and Cys478. Cys478 is a siroheme binding site.

The protein belongs to the nitrite and sulfite reductase 4Fe-4S domain family. As to quaternary structure, alpha(8)-beta(8). The alpha component is a flavoprotein, the beta component is a hemoprotein. Siroheme is required as a cofactor. The cofactor is [4Fe-4S] cluster.

It catalyses the reaction hydrogen sulfide + 3 NADP(+) + 3 H2O = sulfite + 3 NADPH + 4 H(+). The protein operates within sulfur metabolism; hydrogen sulfide biosynthesis; hydrogen sulfide from sulfite (NADPH route): step 1/1. Functionally, component of the sulfite reductase complex that catalyzes the 6-electron reduction of sulfite to sulfide. This is one of several activities required for the biosynthesis of L-cysteine from sulfate. This chain is Sulfite reductase [NADPH] hemoprotein beta-component, found in Shewanella sp. (strain W3-18-1).